The chain runs to 84 residues: Gomesin-like peptide (84 aa).

An N-terminal signal peptide occupies residues 1 to 23 (MNRTRALVCLFLAVLILAHESEA). Gln24 bears the Pyrrolidone carboxylic acid mark. 2 cysteine pairs are disulfide-bonded: Cys25–Cys38 and Cys29–Cys34. An Arginine amide modification is found at Arg41. A propeptide spanning residues 42–84 (GKRSVEEPSGGAQVVEKRAVDDADIPSAVEERELDEEESIEFR) is cleaved from the precursor.

As to expression, expressed by the venom gland.

Its subcellular location is the secreted. Functionally, antibacterial peptide. In Hadronyche infensa (Fraser island funnel-web spider), this protein is Gomesin-like peptide.